The sequence spans 129 residues: Large ribosomal subunit protein bL19 (129 aa).

It belongs to the bacterial ribosomal protein bL19 family.

Functionally, this protein is located at the 30S-50S ribosomal subunit interface and may play a role in the structure and function of the aminoacyl-tRNA binding site. The sequence is that of Large ribosomal subunit protein bL19 from Methylobacillus flagellatus (strain ATCC 51484 / DSM 6875 / VKM B-1610 / KT).